Here is a 396-residue protein sequence, read N- to C-terminus: Stearoyl-[acyl-carrier-protein] 9-desaturase, chloroplastic (396 aa).

A chloroplast-targeting transit peptide spans 1-33 (MALKLNPFLSQTQKLPSFALPPMASTRSPKFYM). The Fe cation site is built by Glu138, Glu176, His179, Glu229, Glu262, and His265.

Belongs to the fatty acid desaturase type 2 family. In terms of assembly, homodimer. The cofactor is Fe(2+). Higher levels in developing seeds than in leaf and root tissues.

It localises to the plastid. The protein resides in the chloroplast. It catalyses the reaction octadecanoyl-[ACP] + 2 reduced [2Fe-2S]-[ferredoxin] + O2 + 2 H(+) = (9Z)-octadecenoyl-[ACP] + 2 oxidized [2Fe-2S]-[ferredoxin] + 2 H2O. Its pathway is lipid metabolism; fatty acid metabolism. Converts stearoyl-ACP to oleoyl-ACP by introduction of a cis double bond between carbons 9 and 10 of the acyl chain. This chain is Stearoyl-[acyl-carrier-protein] 9-desaturase, chloroplastic, found in Ricinus communis (Castor bean).